A 106-amino-acid chain; its full sequence is Small ribosomal subunit protein uS10 (106 aa).

This sequence belongs to the universal ribosomal protein uS10 family. As to quaternary structure, part of the 30S ribosomal subunit.

Its function is as follows. Involved in the binding of tRNA to the ribosomes. This Synechococcus sp. (strain WH7803) protein is Small ribosomal subunit protein uS10.